Consider the following 296-residue polypeptide: MCVRRSLVGLTFCTCYLASYLTNKYVLSVLKFTYPTLFQGWQTLIGGLLLHVSWKLGWVEINSSSRSHVLVWLPASVLFVGIIYAGSRALSRLAIPVFLTLHNVAEVIICGYQKCFQKEKTSPAKICSALLLLAAAGCLPFNDSQFNPDGYFWAIIHLLCVGAYKILQKSQKPSALSDIDQQYLNYIFSVVLLAFASHPTGDLFSVLDFPFLYFYRFHGSCCASGFLGFFLMFSTVKLKNLLAPGQCAAWIFFAKIITAGLSILLFDAILTSATTGCLLLGALGEALLVFSERKSS.

Helical transmembrane passes span Leu7–Val29, Phe32–Val52, Ser67–Ser87, Leu93–Gln113, Thr121–Phe141, Phe146–Ile166, Ile187–Leu207, Phe211–Leu231, Trp250–Leu270, and Thr271–Ser291.

This sequence belongs to the nucleotide-sugar transporter family. SLC35A subfamily.

It is found in the golgi apparatus. It localises to the cis-Golgi network membrane. Golgi-localized UDP-N-acetylglucosamine (UDP-GlcNAc) transporter that transports UDP-N-acetylglucosamine into Golgi lumen. Contributes to lysosomal targeting of NPC2, a key protein required for lysosomal cholesterol exiting, and that utilizes the mannose-6-phosphate (M6P) modification pathway for its lysosomal targeting. The polypeptide is UDP-N-acetylglucosamine transporter TMEM241 (Homo sapiens (Human)).